A 450-amino-acid polypeptide reads, in one-letter code: Protein tweety homolog 1 (450 aa).

Over Met-1 to Ala-43 the chain is Extracellular. Residues Leu-44–Val-64 traverse the membrane as a helical segment. Residues Tyr-65–Gly-88 are Cytoplasmic-facing. The chain crosses the membrane as a helical span at residues Cys-89–Phe-109. Residues Tyr-110–Trp-214 are Extracellular-facing. Residue Asn-130 is glycosylated (N-linked (GlcNAc...) asparagine). The chain crosses the membrane as a helical span at residues Leu-215–Leu-235. At Ala-236–Lys-240 the chain is on the cytoplasmic side. The helical transmembrane segment at Trp-241–Met-261 threads the bilayer. The Extracellular segment spans residues Gly-262–Glu-390. 2 disulfides stabilise this stretch: Cys-275/Cys-385 and Cys-303/Cys-370. Asn-284 and Asn-355 each carry an N-linked (GlcNAc...) asparagine glycan. Residues Gly-391–Cys-411 form a helical membrane-spanning segment. Residues Ser-412–Ile-450 are Cytoplasmic-facing. The interval Asp-428–Ile-450 is disordered. The residue at position 440 (Ser-440) is a Phosphoserine.

The protein belongs to the tweety family. In terms of assembly, homotetramer; disulfide-linked. Homodimer. N-glycosylated. Contains high-mannose, hybrid and complex oligosaccharides.

The protein resides in the cell membrane. The enzyme catalyses chloride(in) = chloride(out). It carries out the reaction L-glutamate(out) = L-glutamate(in). Functionally, calcium-independent, swelling-dependent volume-regulated anion channel (VRAC-swell) which plays a pivotal role in the process of regulatory volume decrease (RVD) in the brain through the efflux of anions like chloride and organic osmolytes like glutamate. The chain is Protein tweety homolog 1 (Ttyh1) from Rattus norvegicus (Rat).